Reading from the N-terminus, the 493-residue chain is Maintenance of mitochondrial morphology protein 1 (493 aa).

Residues 1-23 (MSQHSQYGVPGVPAQSSLSFTQG) are Lumenal-facing. The helical transmembrane segment at 24 to 44 (FLLGQLSVVLLIGAFIKFFIF) threads the bilayer. Topologically, residues 45 to 493 (GEAPAPPSRG…GSMPRVVRTP (449 aa)) are cytoplasmic. Residues 52–104 (SRGLASRTASHHRSYSINQGDNNANNNTNNGSSPRTLREKPSTSNVLRPVPSS) are disordered. Low complexity predominate over residues 69-81 (NQGDNNANNNTNN). Positions 93–104 (STSNVLRPVPSS) are enriched in polar residues. Positions 140-391 (QPESLDWFNV…EPRVQVVGLP (252 aa)) constitute an SMP-LTD domain. The segment at 420–493 (SSRSGGGPVE…GSMPRVVRTP (74 aa)) is disordered.

This sequence belongs to the MMM1 family. In terms of assembly, homodimer. Component of the ER-mitochondria encounter structure (ERMES) or MDM complex, composed of mmm1, mdm10, mdm12 and mdm34. A mmm1 homodimer associates with one molecule of mdm12 on each side in a pairwise head-to-tail manner, and the SMP-LTD domains of mmm1 and mdm12 generate a continuous hydrophobic tunnel for phospholipid trafficking.

Its subcellular location is the endoplasmic reticulum membrane. In terms of biological role, component of the ERMES/MDM complex, which serves as a molecular tether to connect the endoplasmic reticulum (ER) and mitochondria. Components of this complex are involved in the control of mitochondrial shape and protein biogenesis, and function in nonvesicular lipid trafficking between the ER and mitochondria. The mdm12-mmm1 subcomplex functions in the major beta-barrel assembly pathway that is responsible for biogenesis of all outer membrane beta-barrel proteins, and acts in a late step after the SAM complex. The mdm10-mdm12-mmm1 subcomplex further acts in the TOM40-specific pathway after the action of the mdm12-mmm1 complex. Essential for establishing and maintaining the structure of mitochondria and maintenance of mtDNA nucleoids. The chain is Maintenance of mitochondrial morphology protein 1 from Talaromyces stipitatus (strain ATCC 10500 / CBS 375.48 / QM 6759 / NRRL 1006) (Penicillium stipitatum).